The chain runs to 693 residues: MAREFSLEKTRNIGIMAHVDAGKTTTTERILYYTGKIHKIGETHEGASQMDWMEQEQERGITITSAATTAQWNNHRVNIIDTPGHVDFTIEVQRSLRVLDGAVTVLDSQSGVEPQTETVWRQATEYGVPRIVFANKMDKIGADFLYSVSTLHDRLQANAHPIQLPIGSEDDFRGIIDLIKMKAEIYTNDLGTDILEEDIPAEYLDQAQEYREKLIEAVAETDEELMMKYLEGEEITNEELKAGIRKATINVEFFPVLCGSAFKNKGVQLMLDAVIDYLPSPLDIPAIKGINPDTDAEETRPASDEEPFAALAFKIMTDPFVGRLTFFRVYSGVLQSGSYVLNTSKGKRERIGRILQMHANSRQEIDTVYSGDIAAAVGLKDTTTGDSLTDEKSKIILESINVPEPVIQLMVEPKSKADQDKMGIALQKLAEEDPTFRVETNVETGETVISGMGELHLDVLVDRMRREFKVEANVGAPQVSYRETFRASTQARGFFKRQSGGKGQFGDVWIEFTPNEEGKGFEFENAIVGGVVPREFIPAVEKGLVESMANGVLAGYPMVDVKAKLYDGSYHDVDSSETAFKIAASLSLKEAAKSAQPAILEPMMLVTITVPEENLGDVMGHVTARRGRVDGMEAHGNSQIVRAYVPLAEMFGYATVLRSASQGRGTFMMVFDHYEDVPKSVQEEIIKKNKGED.

The tr-type G domain occupies 8 to 282; it reads EKTRNIGIMA…AVIDYLPSPL (275 aa). GTP contacts are provided by residues 17 to 24, 81 to 85, and 135 to 138; these read AHVDAGKT, DTPGH, and NKMD.

The protein belongs to the TRAFAC class translation factor GTPase superfamily. Classic translation factor GTPase family. EF-G/EF-2 subfamily.

The protein localises to the cytoplasm. Its function is as follows. Catalyzes the GTP-dependent ribosomal translocation step during translation elongation. During this step, the ribosome changes from the pre-translocational (PRE) to the post-translocational (POST) state as the newly formed A-site-bound peptidyl-tRNA and P-site-bound deacylated tRNA move to the P and E sites, respectively. Catalyzes the coordinated movement of the two tRNA molecules, the mRNA and conformational changes in the ribosome. In Streptococcus pneumoniae (strain CGSP14), this protein is Elongation factor G.